We begin with the raw amino-acid sequence, 488 residues long: UDP-N-acetylmuramoyl-L-alanyl-D-glutamate--2,6-diaminopimelate ligase (488 aa).

Ser29 contacts UDP-N-acetyl-alpha-D-muramoyl-L-alanyl-D-glutamate. Position 108-114 (108-114) interacts with ATP; that stretch reads GTSGKTS. Residues 150–151, Ser177, Gln183, and Arg185 each bind UDP-N-acetyl-alpha-D-muramoyl-L-alanyl-D-glutamate; that span reads TT. Lys217 is modified (N6-carboxylysine). Meso-2,6-diaminopimelate-binding positions include Arg381, 405-408, Gly453, and Glu457; that span reads DNPR. A Meso-diaminopimelate recognition motif motif is present at residues 405-408; the sequence is DNPR.

This sequence belongs to the MurCDEF family. MurE subfamily. The cofactor is Mg(2+). In terms of processing, carboxylation is probably crucial for Mg(2+) binding and, consequently, for the gamma-phosphate positioning of ATP.

The protein resides in the cytoplasm. The enzyme catalyses UDP-N-acetyl-alpha-D-muramoyl-L-alanyl-D-glutamate + meso-2,6-diaminopimelate + ATP = UDP-N-acetyl-alpha-D-muramoyl-L-alanyl-gamma-D-glutamyl-meso-2,6-diaminopimelate + ADP + phosphate + H(+). It participates in cell wall biogenesis; peptidoglycan biosynthesis. In terms of biological role, catalyzes the addition of meso-diaminopimelic acid to the nucleotide precursor UDP-N-acetylmuramoyl-L-alanyl-D-glutamate (UMAG) in the biosynthesis of bacterial cell-wall peptidoglycan. This is UDP-N-acetylmuramoyl-L-alanyl-D-glutamate--2,6-diaminopimelate ligase from Brucella melitensis biotype 1 (strain ATCC 23456 / CCUG 17765 / NCTC 10094 / 16M).